The primary structure comprises 335 residues: Zinc-type alcohol dehydrogenase-like protein SAR2277 (335 aa).

Belongs to the zinc-containing alcohol dehydrogenase family. Quinone oxidoreductase subfamily.

The polypeptide is Zinc-type alcohol dehydrogenase-like protein SAR2277 (Staphylococcus aureus (strain MRSA252)).